A 78-amino-acid polypeptide reads, in one-letter code: Acyl carrier protein (78 aa).

One can recognise a Carrier domain in the interval Q2–V77. At S37 the chain carries O-(pantetheine 4'-phosphoryl)serine.

Belongs to the acyl carrier protein (ACP) family. Post-translationally, 4'-phosphopantetheine is transferred from CoA to a specific serine of apo-ACP by AcpS. This modification is essential for activity because fatty acids are bound in thioester linkage to the sulfhydryl of the prosthetic group.

It is found in the cytoplasm. Its pathway is lipid metabolism; fatty acid biosynthesis. Its function is as follows. Carrier of the growing fatty acid chain in fatty acid biosynthesis. In Buchnera aphidicola subsp. Baizongia pistaciae (strain Bp), this protein is Acyl carrier protein.